The following is a 496-amino-acid chain: Putative ammonium transporter 1 member 5 (496 aa).

11 helical membrane passes run 50–70 (LLFS…LCAG), 85–105 (VLDA…FAFG), 131–151 (FFLY…GSIA), 156–176 (FVAY…VVSH), 202–222 (FAGS…GALI), 246–266 (LVVL…PGSF), 284–306 (GIGR…TLFG), 314–334 (WNVT…TAGC), 336–356 (VVDP…LIGC), 369–389 (LEAA…VGLF), and 422–442 (LVQI…LFFI). Ser485 is subject to Phosphoserine.

The protein belongs to the ammonia transporter channel (TC 1.A.11.2) family.

The protein resides in the membrane. Involved in ammonium transport. This Arabidopsis thaliana (Mouse-ear cress) protein is Putative ammonium transporter 1 member 5 (AMT1-5).